Here is a 157-residue protein sequence, read N- to C-terminus: Large ribosomal subunit protein uL15 (157 aa).

The segment at 1 to 64 (MKLNEIPAVP…MPLQRRLPKR (64 aa)) is disordered. Residues 21–31 (RGPGSGNGKTA) are compositionally biased toward gly residues.

Belongs to the universal ribosomal protein uL15 family. In terms of assembly, part of the 50S ribosomal subunit.

Binds to the 23S rRNA. This is Large ribosomal subunit protein uL15 from Magnetococcus marinus (strain ATCC BAA-1437 / JCM 17883 / MC-1).